Here is a 244-residue protein sequence, read N- to C-terminus: Eukaryotic translation initiation factor 6 (244 aa).

Residues Ser174 and Ser175 each carry the phosphoserine; by CK1 modification.

Belongs to the eIF-6 family. Monomer. Associates with the 60S ribosomal subunit. In terms of processing, phosphorylation at Ser-174 and Ser-175 promotes nuclear export.

It localises to the cytoplasm. Its subcellular location is the nucleus. It is found in the nucleolus. Functionally, binds to the 60S ribosomal subunit and prevents its association with the 40S ribosomal subunit to form the 80S initiation complex in the cytoplasm. Is also involved in ribosome biogenesis. Associates with pre-60S subunits in the nucleus and is involved in its nuclear export. This chain is Eukaryotic translation initiation factor 6 (tif6), found in Schizosaccharomyces pombe (strain 972 / ATCC 24843) (Fission yeast).